The chain runs to 429 residues: Methylenetetrahydrofolate--tRNA-(uracil-5-)-methyltransferase TrmFO (429 aa).

7–12 (GAGLAG) contributes to the FAD binding site.

It belongs to the MnmG family. TrmFO subfamily. The cofactor is FAD.

It localises to the cytoplasm. The enzyme catalyses uridine(54) in tRNA + (6R)-5,10-methylene-5,6,7,8-tetrahydrofolate + NADH + H(+) = 5-methyluridine(54) in tRNA + (6S)-5,6,7,8-tetrahydrofolate + NAD(+). It carries out the reaction uridine(54) in tRNA + (6R)-5,10-methylene-5,6,7,8-tetrahydrofolate + NADPH + H(+) = 5-methyluridine(54) in tRNA + (6S)-5,6,7,8-tetrahydrofolate + NADP(+). Its function is as follows. Catalyzes the folate-dependent formation of 5-methyl-uridine at position 54 (M-5-U54) in all tRNAs. The chain is Methylenetetrahydrofolate--tRNA-(uracil-5-)-methyltransferase TrmFO from Thermosipho africanus (strain TCF52B).